The following is a 459-amino-acid chain: Bifunctional protein GlmU (459 aa).

Positions methionine 1–arginine 230 are pyrophosphorylase. Residues leucine 9–glycine 12, lysine 23, glutamine 73, and glycine 78–threonine 79 contribute to the UDP-N-acetyl-alpha-D-glucosamine site. Aspartate 103 is a Mg(2+) binding site. The UDP-N-acetyl-alpha-D-glucosamine site is built by glycine 140, glutamate 155, asparagine 170, and asparagine 228. Asparagine 228 serves as a coordination point for Mg(2+). The interval valine 231–asparagine 251 is linker. The tract at residues glycine 252 to serine 459 is N-acetyltransferase. 2 residues coordinate UDP-N-acetyl-alpha-D-glucosamine: arginine 333 and lysine 351. The active-site Proton acceptor is histidine 363. The UDP-N-acetyl-alpha-D-glucosamine site is built by tyrosine 366 and asparagine 377. Residues asparagine 386–tyrosine 387, alanine 423, and arginine 440 contribute to the acetyl-CoA site.

The protein in the N-terminal section; belongs to the N-acetylglucosamine-1-phosphate uridyltransferase family. In the C-terminal section; belongs to the transferase hexapeptide repeat family. As to quaternary structure, homotrimer. Requires Mg(2+) as cofactor.

The protein resides in the cytoplasm. The enzyme catalyses alpha-D-glucosamine 1-phosphate + acetyl-CoA = N-acetyl-alpha-D-glucosamine 1-phosphate + CoA + H(+). It carries out the reaction N-acetyl-alpha-D-glucosamine 1-phosphate + UTP + H(+) = UDP-N-acetyl-alpha-D-glucosamine + diphosphate. It participates in nucleotide-sugar biosynthesis; UDP-N-acetyl-alpha-D-glucosamine biosynthesis; N-acetyl-alpha-D-glucosamine 1-phosphate from alpha-D-glucosamine 6-phosphate (route II): step 2/2. Its pathway is nucleotide-sugar biosynthesis; UDP-N-acetyl-alpha-D-glucosamine biosynthesis; UDP-N-acetyl-alpha-D-glucosamine from N-acetyl-alpha-D-glucosamine 1-phosphate: step 1/1. It functions in the pathway bacterial outer membrane biogenesis; LPS lipid A biosynthesis. In terms of biological role, catalyzes the last two sequential reactions in the de novo biosynthetic pathway for UDP-N-acetylglucosamine (UDP-GlcNAc). The C-terminal domain catalyzes the transfer of acetyl group from acetyl coenzyme A to glucosamine-1-phosphate (GlcN-1-P) to produce N-acetylglucosamine-1-phosphate (GlcNAc-1-P), which is converted into UDP-GlcNAc by the transfer of uridine 5-monophosphate (from uridine 5-triphosphate), a reaction catalyzed by the N-terminal domain. The protein is Bifunctional protein GlmU of Bacillus cereus (strain ATCC 14579 / DSM 31 / CCUG 7414 / JCM 2152 / NBRC 15305 / NCIMB 9373 / NCTC 2599 / NRRL B-3711).